The primary structure comprises 761 residues: MPNFCAAPNCTRKSTQSDLAFFRFPRDPARCQKWVENCRRADLEDKTPDQLNKHYRLCAKHFETSMICRTSPYRTVLRDNAIPTIFDLTSHLNNPHSRHRKRIKELSEDEIRTLKQKKIDETSEQEQKHKETNNSNAQNPSEEEGEGQDEDILPLTLEEKENKEYLKSLFEILILMGKQNIPLDGHEADEIPEGLFTPDNFQALLECRINSGEEVLRKRFETTAVNTLFCSKTQQRQMLEICESCIREETLREVRDSHFFSIITDDVVDIAGEEHLPVLVRFVDESHNLREEFIGFLPYEADAEILAVKFHTMITEKWGLNMEYCRGQAYIVSSGFSSKMKVVASRLLEKYPQAIYTLCSSCALNMWLAKSVPVMGVSVALGTIEEVCSFFHRSPQLLLELDNVISVLFQNSKERGKELKEICHSQWTGRHDAFEILVELLQALVLCLDGINSDTNIRWNNYIAGRAFVLCSAVSDFDFIVTIVVLKNVLSFTRAFGKNLQGQTSDVFFAAGSLTAVLHSLNEVMENIEVYHEFWFEEATNLATKLDIQMKLPGKFRRAHQGNLESQLTSESYYKETLSVPTVEHIIQELKDIFSEQHLKALKCLSLVPSVMGQLKFNTSEEHHADMYRSDLPNPDTLSAELHCWRIKWKHRGKDIELPSTIYEALHLPDIKFFPNVYALLKVLCILPVMKVENERYENGRKRLKAYLRNTLTDQRSSNLALLNINFDIKHDLDLMVDTYIKLYTSKSELPTDNSETVENT.

Residues 1 to 86 form a THAP-type zinc finger; sequence MPNFCAAPNC…LRDNAIPTIF (86 aa). A compositionally biased stretch (basic and acidic residues) spans 116–132; sequence QKKIDETSEQEQKHKET. Positions 116-149 are disordered; it reads QKKIDETSEQEQKHKETNNSNAQNPSEEEGEGQD. Ser566 carries the post-translational modification Phosphoserine.

Interacts with DNAJC3, probably sequestring it.

In terms of biological role, upstream regulator of interferon-induced serine/threonine protein kinase R (PKR). May block the PKR-inhibitory function of DNAJC3, resulting in restoration of kinase activity and suppression of cell growth. This is 52 kDa repressor of the inhibitor of the protein kinase from Homo sapiens (Human).